The primary structure comprises 349 residues: PDZ and LIM domain protein 2 (349 aa).

Residues 1 to 84 enclose the PDZ domain; that stretch reads MALTVNVVGP…PLRLQLDRSQ (84 aa). Disordered regions lie at residues 72–95 and 108–147; these read SASPLRLQLDRSQTASPGQINGEG and LRTHHNSQSSQRSACFSPASLSPRPDSPFSTPPPTSPIAL. Composition is skewed to polar residues over residues 81–90 and 108–121; these read DRSQTASPGQ and LRTHHNSQSSQRSA. Phosphoserine occurs at positions 124, 127, 129, 134, and 137. Phosphothreonine occurs at positions 138 and 142. Phosphoserine is present on residues S143 and S163. 2 disordered regions span residues 168–212 and 250–272; these read ATHH…SSLD and ERGGTPAFVPSSLSPKASLPTSR. Positions 176–192 are enriched in polar residues; it reads GQPTSQQAGHSSPSDST. Phosphoserine is present on residues S199, S204, S205, S209, S210, and S263. Residues 199–211 are compositionally biased toward low complexity; that stretch reads SPGRPSSPRLSSL. Polar residues predominate over residues 260–270; it reads SSLSPKASLPT. Positions 281–341 constitute an LIM zinc-binding domain; it reads HTCEKCSVNI…EKHARQRYSM (61 aa).

In terms of assembly, interacts with alpha-actinins ACTN1 and ACTN4, FLNA and MYH9. Interacts (via LIM zinc-binding domain) with MKRN2. In terms of tissue distribution, highly expressed in cornea and lung. Expressed at intermediate level in sclera and combined tissues of the eye irido-corneal angle. Specifically expressed in the corneal epithelial cells but not in other corneal layers.

Its subcellular location is the cytoplasm. The protein resides in the cytoskeleton. In terms of biological role, probable adapter protein located at the actin cytoskeleton that promotes cell attachment. Necessary for the migratory capacity of epithelial cells. Overexpression enhances cell adhesion to collagen and fibronectin and suppresses anchorage independent growth. May contribute to tumor cell migratory capacity. This Rattus norvegicus (Rat) protein is PDZ and LIM domain protein 2 (Pdlim2).